The chain runs to 631 residues: Eukaryotic translation initiation factor 3 subunit L (631 aa).

One can recognise a PCI domain in the interval 335-526 (TFVSVLIFFI…AETTLLDGER (192 aa)). A disordered region spans residues 571-631 (KSAPLPVRKP…PKSRQARIAA (61 aa)). Residues 580 to 612 (PASSSAPAPATTAAPISKSGESAAPAPAEAPAA) show a composition bias toward low complexity.

Belongs to the eIF-3 subunit L family. Component of the eukaryotic translation initiation factor 3 (eIF-3) complex.

The protein resides in the cytoplasm. In terms of biological role, component of the eukaryotic translation initiation factor 3 (eIF-3) complex, which is involved in protein synthesis of a specialized repertoire of mRNAs and, together with other initiation factors, stimulates binding of mRNA and methionyl-tRNAi to the 40S ribosome. The eIF-3 complex specifically targets and initiates translation of a subset of mRNAs involved in cell proliferation. The sequence is that of Eukaryotic translation initiation factor 3 subunit L from Cryptococcus neoformans var. neoformans serotype D (strain B-3501A) (Filobasidiella neoformans).